The sequence spans 621 residues: Alpha-actinin-like protein 1 (621 aa).

2 Calponin-homology (CH) domains span residues 8–114 (SVQN…LRFT) and 123–230 (LTAK…HAFS). Positions 86 to 110 (LTNIGPADIVDGNLKLILGLIWTLI) are actin-binding. 3 consecutive EF-hand domains span residues 388-419 (LSTI…LGPL), 487-549 (DGIT…EIVM), and 550-618 (EELE…AEDK).

The protein belongs to the alpha-actinin family.

It is found in the cytoplasm. Its subcellular location is the cytoskeleton. Binds to actin and is involved in actin-ring formation and organization. Plays a role in cytokinesis and is involved in septation. The protein is Alpha-actinin-like protein 1 (ain1) of Schizosaccharomyces pombe (strain 972 / ATCC 24843) (Fission yeast).